A 257-amino-acid chain; its full sequence is MAIHPTAIVEAGAQVDPSCDIGPYAVIGPLVRMGPGNSVGAHAVVTGRTTLGASNRIFPHAVIGGIPQDLKYRGEDTALVIGDRNTFREFATVNLGTAGGGGVTRIGSGGLFMASSHIGHDCQVGDGAIIANSVAIAGHVLIEDHVHFGGLSASHQFCRVGRLAFVGGMTGVAMDVAPYCTVAGARGELAGLNTIGMQRAGMTEEQVGRVKQAYKIVFRSSLGLAEAIAQLEAELAGHPETDHFIAFLKGSQRGITR.

Belongs to the transferase hexapeptide repeat family. LpxA subfamily. As to quaternary structure, homotrimer.

The protein resides in the cytoplasm. The catalysed reaction is a (3R)-hydroxyacyl-[ACP] + UDP-N-acetyl-alpha-D-glucosamine = a UDP-3-O-[(3R)-3-hydroxyacyl]-N-acetyl-alpha-D-glucosamine + holo-[ACP]. It functions in the pathway glycolipid biosynthesis; lipid IV(A) biosynthesis; lipid IV(A) from (3R)-3-hydroxytetradecanoyl-[acyl-carrier-protein] and UDP-N-acetyl-alpha-D-glucosamine: step 1/6. Functionally, involved in the biosynthesis of lipid A, a phosphorylated glycolipid that anchors the lipopolysaccharide to the outer membrane of the cell. In Anaeromyxobacter dehalogenans (strain 2CP-1 / ATCC BAA-258), this protein is Acyl-[acyl-carrier-protein]--UDP-N-acetylglucosamine O-acyltransferase.